A 627-amino-acid chain; its full sequence is Altered inheritance of mitochondria protein 9, mitochondrial (627 aa).

The N-terminal 43 residues, 1 to 43, are a transit peptide targeting the mitochondrion; that stretch reads MIRYTVAGHSRRCVVGASKRVGAIKCITVAATKRFISNKSNEV.

The protein belongs to the AIM9 family.

It localises to the mitochondrion. In Saccharomyces cerevisiae (strain JAY291) (Baker's yeast), this protein is Altered inheritance of mitochondria protein 9, mitochondrial (AIM9).